Here is a 230-residue protein sequence, read N- to C-terminus: Sugar fermentation stimulation protein homolog (230 aa).

It belongs to the SfsA family.

The chain is Sugar fermentation stimulation protein homolog from Ruegeria pomeroyi (strain ATCC 700808 / DSM 15171 / DSS-3) (Silicibacter pomeroyi).